Reading from the N-terminus, the 406-residue chain is NIPA-like protein 3 (406 aa).

Helical transmembrane passes span 33–53 (NLIGALLAIFGHLVVSIALNL), 76–96 (WWLGLFLMLLGELGVFASYAF), 101–121 (LIVPLSAVSVIASAIIGIIFI), and 135–155 (ILSFVGCGLAVVGTYLLVTFA). Asn166 carries an N-linked (GlcNAc...) asparagine glycan. Helical transmembrane passes span 171 to 191 (LVSWPFLLYMLVEIILFCLLL), 202 to 222 (IVVILLLVALLGSMTVVTVKA), 240 to 260 (PIFYVMFVCMVATAVYQAAFL), 271 to 291 (LIASVGYILSTTIAITAGAIF), and 300 to 320 (VLHICMFALGCLIAFLGVFLI). The residue at position 372 (Ser372) is a Phosphoserine.

Belongs to the NIPA family.

The protein resides in the membrane. This Pongo abelii (Sumatran orangutan) protein is NIPA-like protein 3 (NIPAL3).